The following is an 82-amino-acid chain: UPF0729 protein C18orf32 homolog (82 aa).

Positions 1 to 37 are necessary for its localzation to the endoplasmic reticulum and lipid droplets; it reads MVCIPCIVIPVLLWVYKKFLEPIVYPFISPIINRIWP. Positions 46-82 are disordered; the sequence is TSAKKEESNGTCKASGTSITNGSVSRGEEAVPDKKTD. Residues 54–69 show a composition bias toward polar residues; that stretch reads NGTCKASGTSITNGSV. The segment covering 71–82 has biased composition (basic and acidic residues); that stretch reads RGEEAVPDKKTD.

It belongs to the UPF0729 family.

Its subcellular location is the endoplasmic reticulum. It localises to the lipid droplet. The polypeptide is UPF0729 protein C18orf32 homolog (Xenopus tropicalis (Western clawed frog)).